Consider the following 643-residue polypeptide: 1-deoxy-D-xylulose-5-phosphate synthase (643 aa).

Thiamine diphosphate-binding positions include His-78 and 119–121 (AHS). Asp-150 is a binding site for Mg(2+). Thiamine diphosphate contacts are provided by residues 151-152 (GS), Asn-179, Tyr-288, and Glu-370. Residue Asn-179 participates in Mg(2+) binding.

The protein belongs to the transketolase family. DXPS subfamily. In terms of assembly, homodimer. Requires Mg(2+) as cofactor. Thiamine diphosphate serves as cofactor.

It catalyses the reaction D-glyceraldehyde 3-phosphate + pyruvate + H(+) = 1-deoxy-D-xylulose 5-phosphate + CO2. The protein operates within metabolic intermediate biosynthesis; 1-deoxy-D-xylulose 5-phosphate biosynthesis; 1-deoxy-D-xylulose 5-phosphate from D-glyceraldehyde 3-phosphate and pyruvate: step 1/1. Functionally, catalyzes the acyloin condensation reaction between C atoms 2 and 3 of pyruvate and glyceraldehyde 3-phosphate to yield 1-deoxy-D-xylulose-5-phosphate (DXP). This chain is 1-deoxy-D-xylulose-5-phosphate synthase, found in Brucella suis (strain ATCC 23445 / NCTC 10510).